Here is a 339-residue protein sequence, read N- to C-terminus: Ketol-acid reductoisomerase (NADP(+)) (339 aa).

The region spanning Met-1 to Thr-182 is the KARI N-terminal Rossmann domain. Residues Tyr-24–Gln-27, Arg-48, Ser-51, Ser-53, and Asp-83–Gln-86 contribute to the NADP(+) site. His-108 is a catalytic residue. Gly-134 is a binding site for NADP(+). In terms of domain architecture, KARI C-terminal knotted spans Thr-183–Ile-328. The Mg(2+) site is built by Asp-191, Glu-195, Glu-227, and Glu-231. Ser-252 provides a ligand contact to substrate.

This sequence belongs to the ketol-acid reductoisomerase family. The cofactor is Mg(2+).

The catalysed reaction is (2R)-2,3-dihydroxy-3-methylbutanoate + NADP(+) = (2S)-2-acetolactate + NADPH + H(+). It catalyses the reaction (2R,3R)-2,3-dihydroxy-3-methylpentanoate + NADP(+) = (S)-2-ethyl-2-hydroxy-3-oxobutanoate + NADPH + H(+). It functions in the pathway amino-acid biosynthesis; L-isoleucine biosynthesis; L-isoleucine from 2-oxobutanoate: step 2/4. It participates in amino-acid biosynthesis; L-valine biosynthesis; L-valine from pyruvate: step 2/4. Involved in the biosynthesis of branched-chain amino acids (BCAA). Catalyzes an alkyl-migration followed by a ketol-acid reduction of (S)-2-acetolactate (S2AL) to yield (R)-2,3-dihydroxy-isovalerate. In the isomerase reaction, S2AL is rearranged via a Mg-dependent methyl migration to produce 3-hydroxy-3-methyl-2-ketobutyrate (HMKB). In the reductase reaction, this 2-ketoacid undergoes a metal-dependent reduction by NADPH to yield (R)-2,3-dihydroxy-isovalerate. This chain is Ketol-acid reductoisomerase (NADP(+)), found in Magnetospirillum molischianum (Rhodospirillum molischianum).